The following is a 523-amino-acid chain: Sensory neuron membrane protein 1 (523 aa).

Residues 1 to 11 (MQLPKELKYAA) are Cytoplasmic-facing. The chain crosses the membrane as a helical span at residues 12-32 (IAGGVALFGLIFGWVLFPTIL). Residues 33 to 458 (KSQLKKEMAL…HQLFIPKRVV (426 aa)) lie on the Extracellular side of the membrane. 2 N-linked (GlcNAc...) asparagine glycosylation sites follow: Asn67 and Asn229. 3 cysteine pairs are disulfide-bonded: Cys268-Cys333, Cys297-Cys352, and Cys335-Cys341. The N-linked (GlcNAc...) asparagine glycan is linked to Asn440. A helical membrane pass occupies residues 459–479 (GVLRWWVVSFGSLGAVIGIVF). The Cytoplasmic segment spans residues 480 to 523 (HFRDHIMRLAVSGDTKVSKVTPEEPEQKDISVIGQAQEPAKVNI).

The protein belongs to the CD36 family. Detected in sensory neurons in the antenna.

It localises to the cell membrane. Its function is as follows. Plays an olfactory role that is not restricted to pheromone sensitivity. The sequence is that of Sensory neuron membrane protein 1 from Heliothis virescens (Tobacco budworm moth).